The sequence spans 424 residues: Serpin E3 (424 aa).

Residues 1-20 (MPPFLITLFLFHSCCLRANG) form the signal peptide. N46 carries an N-linked (GlcNAc...) asparagine glycan. The interval 143–174 (DLSEPNSTAIQTSEGASRETAGGGPSEGPGGW) is disordered. Residues 146–157 (EPNSTAIQTSEG) show a composition bias toward polar residues. Positions 163–173 (AGGGPSEGPGG) are enriched in gly residues.

This sequence belongs to the serpin family.

It is found in the secreted. Functionally, probable serine protease inhibitor. This Homo sapiens (Human) protein is Serpin E3 (SERPINE3).